We begin with the raw amino-acid sequence, 316 residues long: D-alanine--D-alanine ligase (316 aa).

In terms of domain architecture, ATP-grasp spans 129–316 (KYILQAAGIP…ALQAEFCRYP (188 aa)). 162 to 217 (EGSLLYPMFIKPANMGSSVGITKAENREELQNALQEAYRYDTRAIVEQGIEAREIE) contributes to the ATP binding site. The Mg(2+) site is built by D288, E301, and N303.

This sequence belongs to the D-alanine--D-alanine ligase family. Mg(2+) serves as cofactor. Mn(2+) is required as a cofactor.

It is found in the cytoplasm. The catalysed reaction is 2 D-alanine + ATP = D-alanyl-D-alanine + ADP + phosphate + H(+). It participates in cell wall biogenesis; peptidoglycan biosynthesis. Functionally, cell wall formation. The chain is D-alanine--D-alanine ligase (ddl) from Enterococcus gallinarum.